The sequence spans 510 residues: Cytochrome P450 monooxygenase penQ (510 aa).

Residues 9-26 (WIVTLIVAATTYCTLRWV) form a helical membrane-spanning segment. Residues N148 and N341 are each glycosylated (N-linked (GlcNAc...) asparagine). C448 is a binding site for heme. Residue N482 is glycosylated (N-linked (GlcNAc...) asparagine).

Belongs to the cytochrome P450 family. Heme is required as a cofactor.

The protein resides in the membrane. It functions in the pathway secondary metabolite biosynthesis. Its function is as follows. Cytochrome P450 monooxygenase; part of the gene cluster that mediates the biosynthesis of the indole diterpenes penitrems. The geranylgeranyl diphosphate (GGPP) synthase penG catalyzes the first step in penitrem biosynthesis via conversion of farnesyl pyrophosphate and isopentyl pyrophosphate into geranylgeranyl pyrophosphate (GGPP). Condensation of indole-3-glycerol phosphate with GGPP by the prenyl transferase penC then forms 3-geranylgeranylindole (3-GGI). Epoxidation by the FAD-dependent monooxygenase penM leads to a epoxidized-GGI that is substrate of the terpene cyclase penB for cyclization to yield paspaline. Paspaline is subsequently converted to 13-desoxypaxilline by the cytochrome P450 monooxygenase penP, the latter being then converted to paxilline by the cytochrome P450 monooxygenase penQ. Paxilline is converted to beta-paxitriol via C-10 ketoreduction by the short-chain dehydrogenase PC-15 which can be monoprenylated at the C-20 by the indole diterpene prenyltransferase penD. A two-step elimination (acetylation and elimination) process performed by the O-acetyltransferase PC-16 and the P.simplicissimum ptmI-ortholog not yet identified in P.crustosum, leads to the production of the prenylated form of penijanthine. The FAD-linked oxidoreductase ptmO then converts the prenylated form of penijanthine into PC-M5 which is in turn transformed into PC-M4 by the aromatic dimethylallyltransferase PC-22. A series of oxidation steps involving 4 cytochrome P450 monooxygenases (PC-21, PC-05, PC-23, PC-20) and a FAD-dependent monooxygenase (PC-14) are required for the transformation of PC-M4 to penitrems A and E. Synthesis of these final products is proposed to proceed via penitrems D and C (PC-21, PC-05, PC-14) and penitrems B and F (PC-21, PC-05, PC-14, PC-23). The chain is Cytochrome P450 monooxygenase penQ from Penicillium crustosum (Blue mold fungus).